The primary structure comprises 344 residues: Glycerol-3-phosphate dehydrogenase [NAD(P)+] (344 aa).

Residues Ser-11, Trp-12, His-32, Arg-33, and Lys-106 each coordinate NADPH. Sn-glycerol 3-phosphate contacts are provided by Lys-106, Gly-136, and Ser-138. Ala-140 contributes to the NADPH binding site. Sn-glycerol 3-phosphate is bound by residues Lys-192, Asp-245, Ser-255, Arg-256, and Asn-257. Catalysis depends on Lys-192, which acts as the Proton acceptor. Arg-256 provides a ligand contact to NADPH. Val-280 and Glu-282 together coordinate NADPH.

This sequence belongs to the NAD-dependent glycerol-3-phosphate dehydrogenase family.

It is found in the cytoplasm. It catalyses the reaction sn-glycerol 3-phosphate + NAD(+) = dihydroxyacetone phosphate + NADH + H(+). The catalysed reaction is sn-glycerol 3-phosphate + NADP(+) = dihydroxyacetone phosphate + NADPH + H(+). It participates in membrane lipid metabolism; glycerophospholipid metabolism. Functionally, catalyzes the reduction of the glycolytic intermediate dihydroxyacetone phosphate (DHAP) to sn-glycerol 3-phosphate (G3P), the key precursor for phospholipid synthesis. The protein is Glycerol-3-phosphate dehydrogenase [NAD(P)+] of Geobacillus kaustophilus (strain HTA426).